We begin with the raw amino-acid sequence, 393 residues long: Beta-ureidopropionase (393 aa).

Residues 72–344 (VRVGLVQNRI…DGLLVTELNL (273 aa)) enclose the CN hydrolase domain. Residue E119 is the Proton acceptor of the active site. Catalysis depends on K196, which acts as the Proton donor. The Nucleophile role is filled by C233. S378 bears the Phosphoserine mark.

This sequence belongs to the carbon-nitrogen hydrolase superfamily. BUP family. In terms of assembly, homodimer, homotetramer, homooctamer; can also form higher homooligomers.

Its subcellular location is the cytoplasm. The catalysed reaction is 3-(carbamoylamino)propanoate + H2O + 2 H(+) = beta-alanine + NH4(+) + CO2. The enzyme catalyses 3-(carbamoylamino)-2-methylpropanoate + H2O + 2 H(+) = (R)-3-amino-2-methylpropanoate + NH4(+) + CO2. Its pathway is amino-acid biosynthesis; beta-alanine biosynthesis. Catalyzes a late step in pyrimidine degradation. Converts N-carbamoyl-beta-alanine (3-ureidopropanoate) into beta-alanine, ammonia and carbon dioxide. Likewise, converts N-carbamoyl-beta-aminoisobutyrate (3-ureidoisobutyrate) into beta-aminoisobutyrate, ammonia and carbon dioxide. In Mus musculus (Mouse), this protein is Beta-ureidopropionase (Upb1).